Consider the following 335-residue polypeptide: DNA-directed RNA polymerase subunit alpha (335 aa).

The alpha N-terminal domain (alpha-NTD) stretch occupies residues 1-233 (MIRDKISVSI…DLFIPFLHGE (233 aa)). An alpha C-terminal domain (alpha-CTD) region spans residues 264-335 (KEKIAFKHIF…KRFAIDPPRN (72 aa)).

It belongs to the RNA polymerase alpha chain family. As to quaternary structure, in plastids the minimal PEP RNA polymerase catalytic core is composed of four subunits: alpha, beta, beta', and beta''. When a (nuclear-encoded) sigma factor is associated with the core the holoenzyme is formed, which can initiate transcription.

The protein localises to the plastid. Its subcellular location is the chloroplast. It carries out the reaction RNA(n) + a ribonucleoside 5'-triphosphate = RNA(n+1) + diphosphate. Functionally, DNA-dependent RNA polymerase catalyzes the transcription of DNA into RNA using the four ribonucleoside triphosphates as substrates. The protein is DNA-directed RNA polymerase subunit alpha of Pinus koraiensis (Korean pine).